We begin with the raw amino-acid sequence, 218 residues long: Cytidylate kinase (218 aa).

Residue 11–19 (GPSGVGKST) participates in ATP binding.

The protein belongs to the cytidylate kinase family. Type 1 subfamily.

It localises to the cytoplasm. It catalyses the reaction CMP + ATP = CDP + ADP. It carries out the reaction dCMP + ATP = dCDP + ADP. The chain is Cytidylate kinase from Mycoplasmopsis synoviae (strain 53) (Mycoplasma synoviae).